A 307-amino-acid chain; its full sequence is DNA damage tolerance protein rad31 (307 aa).

Functionally, could be involved in a ubiquitin-related process important for DNA damage tolerance. Acts in a process which is defective in the checkpoint rad mutants and which involves hus5. The sequence is that of DNA damage tolerance protein rad31 (rad31) from Schizosaccharomyces pombe (strain 972 / ATCC 24843) (Fission yeast).